We begin with the raw amino-acid sequence, 196 residues long: DnaA initiator-associating protein DiaA (196 aa).

Residues 34-196 (LVHSLLNGNK…DNTLFPHQDD (163 aa)) enclose the SIS domain.

This sequence belongs to the SIS family. DiaA subfamily. Homotetramer; dimer of dimers.

Required for the timely initiation of chromosomal replication via direct interactions with the DnaA initiator protein. The sequence is that of DnaA initiator-associating protein DiaA from Citrobacter koseri (strain ATCC BAA-895 / CDC 4225-83 / SGSC4696).